Consider the following 296-residue polypeptide: Light-independent protochlorophyllide reductase iron-sulfur ATP-binding protein (296 aa).

Residues methionine 1–aspartate 20 form a disordered region. ATP-binding positions include glycine 39 to threonine 44 and lysine 68. Position 43 (serine 43) interacts with Mg(2+). Cysteine 124 and cysteine 158 together coordinate [4Fe-4S] cluster. Asparagine 209–arginine 210 serves as a coordination point for ATP.

This sequence belongs to the NifH/BchL/ChlL family. In terms of assembly, homodimer. Protochlorophyllide reductase is composed of three subunits; ChlL, ChlN and ChlB. [4Fe-4S] cluster serves as cofactor.

It carries out the reaction chlorophyllide a + oxidized 2[4Fe-4S]-[ferredoxin] + 2 ADP + 2 phosphate = protochlorophyllide a + reduced 2[4Fe-4S]-[ferredoxin] + 2 ATP + 2 H2O. The protein operates within porphyrin-containing compound metabolism; chlorophyll biosynthesis (light-independent). Its function is as follows. Component of the dark-operative protochlorophyllide reductase (DPOR) that uses Mg-ATP and reduced ferredoxin to reduce ring D of protochlorophyllide (Pchlide) to form chlorophyllide a (Chlide). This reaction is light-independent. The L component serves as a unique electron donor to the NB-component of the complex, and binds Mg-ATP. This chain is Light-independent protochlorophyllide reductase iron-sulfur ATP-binding protein, found in Synechococcus sp. (strain CC9902).